Here is an 853-residue protein sequence, read N- to C-terminus: MKAEQKHTPMMQQYLKLKAENPEILLFYRMGDFYELFYDDAKRASQLLDISLTKRGSSAGEPIPMAGVPFHAVEGYLAKLVQLGESVAICEQIGDPATSKGPVERKVVRIVTPGTVTDEALLSERLDNLIAAIYHHNGKFGYATLDVTSGRFQLTEPETEEAMMAELQRTAPRELLFPEDFEPVHLMSNRNGNRRRPVWEFELDTAKQQLNQQFGTRDLVGFGVEHASLGLCAAGCLIQYVKDTQRTALPHIRSLTFDRQDHSVILDAATRRNLEITQNLAGGTDNTLAAVLDHCSTPMGSRMLKRWLHQPMRCIDTLNNRLDAIGEIKDQGLFTDLQPTLKQIGDIERILARLALRSARPRDMARLRHAMQQLPELESLTASLTHPYLVKLAQYAAPIDEVCELLERAIKENPPVVIRDGGVIAEGYNEELDEWRKLADGATEYLEKLEADERERHGIDTLKVGYNAVHGFFIQVSRGQSHLVPPHYVRRQTLKNAERYIIPELKEHEDKVLNSKSKALALEKKLWEELFDLLMPHLEQMQNLASAVSQMDVLQNLAERADSLDYCRPTLVKDAGIHIQAGRHPVVEQVTSDPFIANPIELSPSRKMLIITGPNMGGKSTYMRQTALIALMAHIGSYVPAESAQIGSLDRIFTRIGASDDLASGRSTFMVEMTETANILHNATKNSLVLMDEIGRGTSTYDGLSLAWASAEWLATQIGAMTLFATHYFELTELPNLLPNLANVHLDAVEHGDSIAFMHAVQEGAASKSYGLAVAGLAGVPKTVIKNARTKLSQLEQLGQASDSPRPSTVDVANQLSLIPEPSEIEQALSNIDPDDLTPRQALEELYRLKKML.

613–620 lines the ATP pocket; it reads GPNMGGKS.

The protein belongs to the DNA mismatch repair MutS family.

This protein is involved in the repair of mismatches in DNA. It is possible that it carries out the mismatch recognition step. This protein has a weak ATPase activity. The sequence is that of DNA mismatch repair protein MutS from Vibrio parahaemolyticus serotype O3:K6 (strain RIMD 2210633).